Here is a 205-residue protein sequence, read N- to C-terminus: N-(5'-phosphoribosyl)anthranilate isomerase (205 aa).

Belongs to the TrpF family.

It carries out the reaction N-(5-phospho-beta-D-ribosyl)anthranilate = 1-(2-carboxyphenylamino)-1-deoxy-D-ribulose 5-phosphate. Its pathway is amino-acid biosynthesis; L-tryptophan biosynthesis; L-tryptophan from chorismate: step 3/5. In Acidithiobacillus ferrooxidans (strain ATCC 23270 / DSM 14882 / CIP 104768 / NCIMB 8455) (Ferrobacillus ferrooxidans (strain ATCC 23270)), this protein is N-(5'-phosphoribosyl)anthranilate isomerase.